A 1347-amino-acid polypeptide reads, in one-letter code: Spermatogenesis-associated protein 31A5 (1347 aa).

The helical transmembrane segment at Pro23–Leu43 threads the bilayer. Disordered stretches follow at residues Pro55–Cys87, Gly106–Thr233, Glu373–Lys397, Asp628–Gln657, Arg900–Val955, Val1084–Ser1161, and Lys1313–His1335. Residues Gly60–Arg82 are compositionally biased toward basic residues. A compositionally biased stretch (polar residues) spans Leu165–Val178. Residues Pro198–Pro211 are compositionally biased toward pro residues. Polar residues-rich tracts occupy residues Pro631–Glu651 and Leu927–Ala948. 2 stretches are compositionally biased toward basic and acidic residues: residues His1108 to Gly1127 and Arg1137 to Glu1146.

This sequence belongs to the SPATA31 family.

It localises to the membrane. May play a role in spermatogenesis. In Homo sapiens (Human), this protein is Spermatogenesis-associated protein 31A5 (SPATA31A5).